The primary structure comprises 865 residues: Alanine--tRNA ligase (865 aa).

4 residues coordinate Zn(2+): His554, His558, Cys656, and His660.

This sequence belongs to the class-II aminoacyl-tRNA synthetase family. The cofactor is Zn(2+).

Its subcellular location is the cytoplasm. It carries out the reaction tRNA(Ala) + L-alanine + ATP = L-alanyl-tRNA(Ala) + AMP + diphosphate. Functionally, catalyzes the attachment of alanine to tRNA(Ala) in a two-step reaction: alanine is first activated by ATP to form Ala-AMP and then transferred to the acceptor end of tRNA(Ala). Also edits incorrectly charged Ser-tRNA(Ala) and Gly-tRNA(Ala) via its editing domain. In Idiomarina loihiensis (strain ATCC BAA-735 / DSM 15497 / L2-TR), this protein is Alanine--tRNA ligase.